The chain runs to 265 residues: HUWE1-associated protein modifying stress responses (265 aa).

Disordered stretches follow at residues 1–22, 145–170, 195–218, and 240–265; these read MEDK…HWFS, RNSR…GSSV, VRSS…RRNG, and GTRK…NRMI. Polar residues-rich tracts occupy residues 156 to 170 and 195 to 212; these read VSPN…GSSV and VRSS…SSNT.

Belongs to the HAPSTR1 family. As to quaternary structure, oligomer.

Its subcellular location is the nucleus. The protein resides in the cytoplasm. Acts as a central player within a network of stress response pathways promoting cellular adaptability. Functions as a negative regulator of TP53/P53 in the cellular response to telomere erosion and probably also DNA damage. This Xenopus tropicalis (Western clawed frog) protein is HUWE1-associated protein modifying stress responses.